Here is a 437-residue protein sequence, read N- to C-terminus: Probable indole-3-pyruvate monooxygenase YUCCA3 (437 aa).

41 to 46 (GAGPSG) contacts FAD. 212 to 217 (GCGNSG) is a binding site for NADP(+).

Belongs to the FMO family. It depends on FAD as a cofactor.

It catalyses the reaction indole-3-pyruvate + NADPH + O2 + H(+) = (indol-3-yl)acetate + CO2 + NADP(+) + H2O. It functions in the pathway plant hormone metabolism; auxin biosynthesis. In terms of biological role, involved in auxin biosynthesis. Belongs to the set of redundant YUCCA genes probably responsible for auxin biosynthesis in roots. The protein is Probable indole-3-pyruvate monooxygenase YUCCA3 (YUC3) of Arabidopsis thaliana (Mouse-ear cress).